A 1053-amino-acid chain; its full sequence is CRISPR-associated endonuclease Cas9 (1053 aa).

The ruvC-I stretch occupies residues Met1–Val41. The active-site For RuvC-like nuclease domain is the Asp10. Asp10 lines the Mg(2+) pocket. Positions Val41–Lys426 are recognition lobe. A ruvC-II region spans residues Glu435–Glu481. Glu477 and Glu481 together coordinate Mg(2+). The HNH Cas9-type domain maps to Arg480–Leu646. His557 acts as the Proton acceptor for HNH nuclease domain in catalysis. A ruvC-III region spans residues Arg650–Val775. His701 serves as a coordination point for Mg(2+). Tyr789 serves as a coordination point for RNA. PAM substrate-binding regions lie at residues Tyr882–Ala889 and Asn985–Glu993. The tract at residues Lys910 to Gly1053 is PAM-interacting domain (PI).

Belongs to the CRISPR-associated Cas9 family. Subtype II-A subfamily. In terms of assembly, monomer. Binds crRNA and tracrRNA. Mg(2+) serves as cofactor.

CRISPR (clustered regularly interspaced short palindromic repeat) is an adaptive immune system that provides protection against mobile genetic elements (viruses, transposable elements and conjugative plasmids). CRISPR clusters contain spacers, sequences complementary to antecedent mobile elements, and target invading nucleic acids. CRISPR clusters are transcribed and processed into CRISPR RNA (crRNA). In type II CRISPR systems correct processing of pre-crRNA requires a trans-encoded small RNA (tracrRNA), endogenous ribonuclease 3 (rnc) and this protein. The tracrRNA serves as a guide for ribonuclease 3-aided processing of pre-crRNA. Subsequently Cas9/crRNA/tracrRNA endonucleolytically cleaves linear or circular dsDNA target complementary to the spacer; Cas9 is inactive in the absence of the 2 guide RNAs (gRNA). Cas9 recognizes the protospacer adjacent motif (PAM) in the CRISPR repeat sequences to help distinguish self versus nonself, as targets within the bacterial CRISPR locus do not have PAMs. PAM recognition is also required for catalytic activity. The protein is CRISPR-associated endonuclease Cas9 of Staphylococcus aureus.